The chain runs to 392 residues: Pectate lyase 3 (392 aa).

The signal sequence occupies residues 1 to 25; the sequence is MGIKHCCYILYFTLALVTLLQPVRS. Asparagine 37 carries N-linked (GlcNAc...) asparagine glycosylation. Cysteine 54 and cysteine 71 are oxidised to a cystine. Residues aspartate 194, aspartate 218, and aspartate 222 each contribute to the Ca(2+) site. The active site involves arginine 270.

It belongs to the polysaccharide lyase 1 family. Amb a subfamily. Monomer. The cofactor is Ca(2+). In terms of processing, the N-terminus is blocked. In terms of tissue distribution, pollen and flowers.

The enzyme catalyses Eliminative cleavage of (1-&gt;4)-alpha-D-galacturonan to give oligosaccharides with 4-deoxy-alpha-D-galact-4-enuronosyl groups at their non-reducing ends.. Its pathway is glycan metabolism; pectin degradation; 2-dehydro-3-deoxy-D-gluconate from pectin: step 2/5. Its function is as follows. Has pectate lyase activity. The polypeptide is Pectate lyase 3 (Ambrosia artemisiifolia (Common ragweed)).